A 346-amino-acid polypeptide reads, in one-letter code: tRNA N6-adenosine threonylcarbamoyltransferase (346 aa).

Fe cation is bound by residues histidine 109, histidine 113, and tyrosine 135. Substrate-binding positions include 135 to 139 (YVSGG), aspartate 167, glycine 180, glutamate 184, and asparagine 263. Aspartate 291 contributes to the Fe cation binding site.

This sequence belongs to the KAE1 / TsaD family. In terms of assembly, monomer. Component of the KEOPS complex that consists of Kae1, Bud32, Cgi121 and Pcc1; the whole complex dimerizes. It depends on Fe(2+) as a cofactor.

The protein resides in the cytoplasm. It catalyses the reaction L-threonylcarbamoyladenylate + adenosine(37) in tRNA = N(6)-L-threonylcarbamoyladenosine(37) in tRNA + AMP + H(+). Its function is as follows. Required for the formation of a threonylcarbamoyl group on adenosine at position 37 (t(6)A37) in tRNAs that read codons beginning with adenine. Is a component of the KEOPS complex that is probably involved in the transfer of the threonylcarbamoyl moiety of threonylcarbamoyl-AMP (TC-AMP) to the N6 group of A37. Kae1 likely plays a direct catalytic role in this reaction, but requires other protein(s) of the complex to fulfill this activity. This is tRNA N6-adenosine threonylcarbamoyltransferase from Methanopyrus kandleri (strain AV19 / DSM 6324 / JCM 9639 / NBRC 100938).